Consider the following 76-residue polypeptide: Sec-independent protein translocase protein TatA (76 aa).

Residues 1–21 form a helical membrane-spanning segment; it reads MGSFSIWHWLIVLVIVMLVFG. Composition is skewed to basic and acidic residues over residues 41-50 and 57-76; these read DGMKDGEDKG and KELR…SRQQ. Residues 41–76 are disordered; it reads DGMKDGEDKGAQPAASKELRDSTTIDVDAKEKSRQQ.

The protein belongs to the TatA/E family. The Tat system comprises two distinct complexes: a TatABC complex, containing multiple copies of TatA, TatB and TatC subunits, and a separate TatA complex, containing only TatA subunits. Substrates initially bind to the TatABC complex, which probably triggers association of the separate TatA complex to form the active translocon.

The protein localises to the cell inner membrane. Functionally, part of the twin-arginine translocation (Tat) system that transports large folded proteins containing a characteristic twin-arginine motif in their signal peptide across membranes. TatA could form the protein-conducting channel of the Tat system. In Cupriavidus taiwanensis (strain DSM 17343 / BCRC 17206 / CCUG 44338 / CIP 107171 / LMG 19424 / R1) (Ralstonia taiwanensis (strain LMG 19424)), this protein is Sec-independent protein translocase protein TatA.